The primary structure comprises 268 residues: MASSDVFVAAARKCLRVGKKRFSATVSLNLATQVLAVDLGLKPALLYDSNTASAEQVQQYLNSLQAAQLVSKSLQTLVISENSLIVNPSLTIANLEALLLRRTVTVVDVCHSLEQPAITELQWGAIRDMIQALLAHIRQFGQHSAMRNVPHRIEKRHCETWNLCTLFGILLGYPSTYWFDQSRSFENCLAMSPLVVTKAVASWQGGDSGVEGHRCCLYSFSTPEMLQADTQSVMASWTTQLQERFQQQKVLSGLSVTRSTVTLPSVAL.

The protein belongs to the UPF0739 family.

The polypeptide is UPF0739 protein C1orf74 homolog (Salmo salar (Atlantic salmon)).